Reading from the N-terminus, the 460-residue chain is Cysteine proteinase 7 (460 aa).

A signal peptide spans 1-17 (MKVLSALCVLLVSVATA). The propeptide at 18-111 (KQQLSEVEYR…TESDKIFDAS (94 aa)) is activation peptide. Cystine bridges form between C131/C176 and C167/C210. The active site involves C134. N-linked (GlcNAc...) asparagine glycans are attached at residues N226 and N252. A disulfide bridge connects residues C268 and C445. Residue H275 is part of the active site. The interval 285-409 (GSGSSGSHGG…GSSSGSNSNG (125 aa)) is disordered. Low complexity predominate over residues 294-359 (GSQSQSAGSD…QSGSQSGNSG (66 aa)). Positions 367 to 385 (AGSGSGSGSGSGSGSGSGS) are enriched in gly residues. Positions 386-409 (VSGSASGSASGSASGSSSGSNSNG) are enriched in low complexity. N423 is an active-site residue.

The protein belongs to the peptidase C1 family. Post-translationally, glycosylated; contains GlcNAc-alpha-1-P-Ser residues. Also N-glycosylated.

The protein resides in the lysosome. In Dictyostelium discoideum (Social amoeba), this protein is Cysteine proteinase 7 (cprG).